The primary structure comprises 876 residues: Alanine--tRNA ligase (876 aa).

Positions 565, 569, 667, and 671 each coordinate Zn(2+).

Belongs to the class-II aminoacyl-tRNA synthetase family. Requires Zn(2+) as cofactor.

It localises to the cytoplasm. It carries out the reaction tRNA(Ala) + L-alanine + ATP = L-alanyl-tRNA(Ala) + AMP + diphosphate. Functionally, catalyzes the attachment of alanine to tRNA(Ala) in a two-step reaction: alanine is first activated by ATP to form Ala-AMP and then transferred to the acceptor end of tRNA(Ala). Also edits incorrectly charged Ser-tRNA(Ala) and Gly-tRNA(Ala) via its editing domain. The protein is Alanine--tRNA ligase of Staphylococcus aureus (strain MSSA476).